The following is a 294-amino-acid chain: UPF0761 membrane protein MADE_1017605/MADE_1018330 (294 aa).

6 helical membrane passes run Leu45 to Phe65, Ala99 to Ser119, Phe141 to Val161, Phe182 to Val202, Ala213 to Leu233, and Ala247 to Phe267.

It belongs to the UPF0761 family.

The protein resides in the cell inner membrane. The polypeptide is UPF0761 membrane protein MADE_1017605/MADE_1018330 (Alteromonas mediterranea (strain DSM 17117 / CIP 110805 / LMG 28347 / Deep ecotype)).